Consider the following 423-residue polypeptide: 3-phosphoshikimate 1-carboxyvinyltransferase (423 aa).

3 residues coordinate 3-phosphoshikimate: K21, S22, and R26. K21 provides a ligand contact to phosphoenolpyruvate. Phosphoenolpyruvate is bound by residues G92 and R120. Residues S164, Q166, D312, and K339 each coordinate 3-phosphoshikimate. Q166 is a phosphoenolpyruvate binding site. The Proton acceptor role is filled by D312. Residues R343 and R385 each contribute to the phosphoenolpyruvate site.

Belongs to the EPSP synthase family. Monomer.

It localises to the cytoplasm. The enzyme catalyses 3-phosphoshikimate + phosphoenolpyruvate = 5-O-(1-carboxyvinyl)-3-phosphoshikimate + phosphate. Its pathway is metabolic intermediate biosynthesis; chorismate biosynthesis; chorismate from D-erythrose 4-phosphate and phosphoenolpyruvate: step 6/7. Catalyzes the transfer of the enolpyruvyl moiety of phosphoenolpyruvate (PEP) to the 5-hydroxyl of shikimate-3-phosphate (S3P) to produce enolpyruvyl shikimate-3-phosphate and inorganic phosphate. The polypeptide is 3-phosphoshikimate 1-carboxyvinyltransferase (Thermoanaerobacter pseudethanolicus (strain ATCC 33223 / 39E) (Clostridium thermohydrosulfuricum)).